Reading from the N-terminus, the 314-residue chain is D-alanine--D-alanine ligase (314 aa).

The ATP-grasp domain occupies 115–310 (KQVWQSVGLV…FNELVLEILA (196 aa)). 141-196 (LDSLGGQGFVKPAHEGSSIGMSVVSTAQELKAAYEKAAHYDAKVLVERRIVGREFT) is an ATP binding site. Residues Asp264, Glu277, and Asn279 each coordinate Mg(2+).

It belongs to the D-alanine--D-alanine ligase family. Mg(2+) serves as cofactor. Requires Mn(2+) as cofactor.

It is found in the cytoplasm. The enzyme catalyses 2 D-alanine + ATP = D-alanyl-D-alanine + ADP + phosphate + H(+). It participates in cell wall biogenesis; peptidoglycan biosynthesis. Cell wall formation. In Saccharophagus degradans (strain 2-40 / ATCC 43961 / DSM 17024), this protein is D-alanine--D-alanine ligase.